The primary structure comprises 1782 residues: Signal-induced proliferation-associated 1-like protein 1 (1782 aa).

3 disordered regions span residues 1-28, 47-125, and 140-171; these read MTSLKRSQTERPVTADRASVVSTDGAPK, GSSV…VSLN, and KNKTGPAESMDSRFLMPEAYPSSPRKALRRIR. The segment covering 84-94 has biased composition (basic and acidic residues); the sequence is PPRKENVKESS. A compositionally biased stretch (low complexity) spans 95–125; sequence RSSQEIETSSCLESLSSKGSPVSQGSSVSLN. Phosphoserine is present on residues Ser162, Ser187, Ser193, Ser208, Ser255, and Ser288. The disordered stretch occupies residues 277 to 297; that stretch reads EREKPLKRRSKSETGDSSIFR. The region spanning 599–816 is the Rap-GAP domain; sequence LMKLDEQGLN…RTRQEYLKDL (218 aa). The PDZ domain maps to 953–1031; the sequence is EMTLRRNGLG…VVIIPPHDDC (79 aa). 2 disordered regions span residues 1069 to 1128 and 1144 to 1213; these read QRNA…RLSP and SQCR…SLAD. Phosphoserine is present on residues Ser1078, Ser1087, Ser1116, Ser1127, Ser1149, Ser1170, and Ser1181. Polar residues predominate over residues 1080-1093; that stretch reads QVPSQLQSPMTSRL. Positions 1149–1159 are enriched in low complexity; sequence SPSNLSSSSET. Residues 1186-1205 are compositionally biased toward polar residues; sequence DRQNTQSDISGSGKSTPSWQ. 2 positions are modified to phosphoserine: Ser1234 and Ser1249. Residues 1247-1285 are disordered; it reads HLSPNKQGHSDSHYSSHSSSNTLSSNASSAHSDEKWYDG. The span at 1261 to 1276 shows a compositional bias: low complexity; sequence SSHSSSNTLSSNASSA. A Phosphoserine; by PLK2 modification is found at Ser1305. The tract at residues 1307-1342 is disordered; it reads IDTASYGPSHGSTASLGASTSSPRSGPGKEKVAPLW. Position 1309 is a phosphothreonine; by PLK2 (Thr1309). Positions 1315–1328 are enriched in low complexity; it reads SHGSTASLGASTSS. Residue Ser1328 is modified to Phosphoserine; by CDK5. At Ser1345 the chain carries Phosphoserine. Basic and acidic residues predominate over residues 1358–1368; that stretch reads TEGHGMDRKAE. The interval 1358–1454 is disordered; it reads TEGHGMDRKA…SSSGPRTFYP (97 aa). Residues Ser1369, Ser1370, Ser1391, Ser1410, and Ser1412 each carry the phosphoserine modification. Positions 1378 to 1410 are enriched in polar residues; that stretch reads KSQGGSSPLSRENSTFSINDAASHTSTMSSRHS. Over residues 1432-1447 the composition is skewed to low complexity; the sequence is SSQLAPSFSSSSSSSS. Phosphoserine is present on residues Ser1507 and Ser1528. Position 1530 is a phosphothreonine (Thr1530). Ser1533, Ser1544, Ser1547, Ser1564, and Ser1567 each carry phosphoserine. Arg1580 carries the asymmetric dimethylarginine modification. Residues Ser1582, Ser1624, Ser1626, Ser1629, Ser1687, Ser1690, Ser1707, Ser1708, and Ser1712 each carry the phosphoserine modification. The disordered stretch occupies residues 1625–1647; that stretch reads ASDSSLTDIQETRRQPIPDPGLM. Positions 1713-1773 form a coiled coil; the sequence is PTLASKVDQL…ASDKLKKFTE (61 aa).

Interacts with DLG4, PDLIM5, PDLIM7 and LZTS3. Interacts with the actin cytoskeleton. Interacts (via PDZ domain) with EPHA4 (via PDZ motif); controls neuronal morphology through regulation of the RAP1 (RAP1A or RAP1B) and RAP2 (RAP2A, RAP2B or RAP2C) GTPases. In terms of processing, ubiquitinated and degraded by the SCF(BTRC) following phosphorylation by PLK2. Phosphorylated at Ser-1328 by CDK5, creating a docking site for the POLO box domains of PLK2. Subsequently, PLK2 binds and phosphorylates SIPA1L1, leading to ubiquitination and degradation by the proteasome.

The protein localises to the cytoplasm. It is found in the cytoskeleton. It localises to the postsynaptic density. Its subcellular location is the synapse. The protein resides in the synaptosome. Its function is as follows. Stimulates the GTPase activity of RAP2A. Promotes reorganization of the actin cytoskeleton and recruits DLG4 to F-actin. Contributes to the regulation of dendritic spine morphogenesis. The protein is Signal-induced proliferation-associated 1-like protein 1 (Sipa1l1) of Mus musculus (Mouse).